Reading from the N-terminus, the 87-residue chain is Probable Fe(2+)-trafficking protein (87 aa).

It belongs to the Fe(2+)-trafficking protein family.

Functionally, could be a mediator in iron transactions between iron acquisition and iron-requiring processes, such as synthesis and/or repair of Fe-S clusters in biosynthetic enzymes. In Francisella philomiragia subsp. philomiragia (strain ATCC 25017 / CCUG 19701 / FSC 153 / O#319-036), this protein is Probable Fe(2+)-trafficking protein.